The chain runs to 276 residues: Large ribosomal subunit protein uL2 (276 aa).

Disordered stretches follow at residues 37–59 and 225–276; these read QIQK…GGHK and VMNP…RHKR. Positions 39 to 49 are enriched in polar residues; it reads QKSGRNNNGHI. Positions 50-59 are enriched in basic residues; it reads TTRHKGGGHK.

The protein belongs to the universal ribosomal protein uL2 family. In terms of assembly, part of the 50S ribosomal subunit. Forms a bridge to the 30S subunit in the 70S ribosome.

In terms of biological role, one of the primary rRNA binding proteins. Required for association of the 30S and 50S subunits to form the 70S ribosome, for tRNA binding and peptide bond formation. It has been suggested to have peptidyltransferase activity; this is somewhat controversial. Makes several contacts with the 16S rRNA in the 70S ribosome. The sequence is that of Large ribosomal subunit protein uL2 from Ralstonia pickettii (strain 12J).